The following is a 432-amino-acid chain: uncharacterized protein (432 aa).

The 210-residue stretch at 223 to 432 (ASAVRGEALF…KDLIEYLKTR (210 aa)) folds into the Cytochrome c domain. Heme c contacts are provided by Cys236, Cys239, and His240.

This is an uncharacterized protein from Sinorhizobium fredii (strain NBRC 101917 / NGR234).